The following is a 129-amino-acid chain: uncharacterized protein (129 aa).

The signal sequence occupies residues 1–21 (MAQNKTIAVALLLATLVAVMG).

This is an uncharacterized protein from Oryza sativa subsp. japonica (Rice).